Reading from the N-terminus, the 226-residue chain is 7-cyano-7-deazaguanine synthase (226 aa).

Residue 7–17 (LSGGMDSLVTT) participates in ATP binding. Zn(2+) contacts are provided by cysteine 187, cysteine 195, cysteine 198, and cysteine 201.

Belongs to the QueC family. Requires Zn(2+) as cofactor.

It carries out the reaction 7-carboxy-7-deazaguanine + NH4(+) + ATP = 7-cyano-7-deazaguanine + ADP + phosphate + H2O + H(+). The protein operates within purine metabolism; 7-cyano-7-deazaguanine biosynthesis. In terms of biological role, catalyzes the ATP-dependent conversion of 7-carboxy-7-deazaguanine (CDG) to 7-cyano-7-deazaguanine (preQ(0)). The chain is 7-cyano-7-deazaguanine synthase from Chlorobium phaeobacteroides (strain DSM 266 / SMG 266 / 2430).